Reading from the N-terminus, the 263-residue chain is Type III pantothenate kinase (263 aa).

9 to 16 (DIGNTNVK) is a binding site for ATP. Residues tyrosine 103 and 110–113 (GADR) contribute to the substrate site. The Proton acceptor role is filled by aspartate 112. Residue aspartate 134 coordinates K(+). Threonine 137 contacts ATP. Substrate is bound at residue threonine 190.

This sequence belongs to the type III pantothenate kinase family. In terms of assembly, homodimer. NH4(+) is required as a cofactor. The cofactor is K(+).

Its subcellular location is the cytoplasm. It carries out the reaction (R)-pantothenate + ATP = (R)-4'-phosphopantothenate + ADP + H(+). It functions in the pathway cofactor biosynthesis; coenzyme A biosynthesis; CoA from (R)-pantothenate: step 1/5. Functionally, catalyzes the phosphorylation of pantothenate (Pan), the first step in CoA biosynthesis. This is Type III pantothenate kinase from Oleidesulfovibrio alaskensis (strain ATCC BAA-1058 / DSM 17464 / G20) (Desulfovibrio alaskensis).